The following is a 578-amino-acid chain: MILSLFKLFGKENFFIQDSYLESPILWIDSTILIQVIGFLKKNNTCSYEILFDLFGIDERTRKNVKSFPNADFTVSYYFFSISNNSDLILKVALLKEHLQLPTISSIFLNANWYEREIWDMFGIVFNNHPYLTRILMPKNWVGHPLRKDYSSHATEFDEFYFTKQKEDLAMESLKFCPKSWGLENNDSNNSEYMFLNFGPNHPSSHGAFRIVLQLHGEKIINCIPDIGYHHRGAEKIAERQTWHSYIPYTDRIEYLGGCVNEMPYILAVEKLAGIVVPEKVQVIRILLSELFRINSHLLFLSTFIQDIGSMSTVFLAFTDRQKIYDLIESITGARMHPAWFRIGGVAKDLPKNWNSLLKKFLIWMPKRLDYYVNIAIKNKILISRSKGIAAYGKKEALSWGITGAGLRATGVNFDVRKNRPYSGYQNFDFEVPIGNNISDAYTRVLLKIEEIRQSLKILNQCLLHMPLGSYKSDHPLSTPQKKNKSLFHIERMITHFLQMSWGPIIPSNESFQMIEATKGINSYYLISDGLTTSYRTRIRTPSFAHLQQIPSVIRGYVISDLIVYLGSIDFVMSDVDR.

The tract at residues 1 to 167 is NADH dehydrogenase I subunit C; the sequence is MILSLFKLFG…DEFYFTKQKE (167 aa). The interval 192–578 is NADH dehydrogenase I subunit D; that stretch reads EYMFLNFGPN…IDFVMSDVDR (387 aa).

This sequence in the N-terminal section; belongs to the complex I 30 kDa subunit family. It in the C-terminal section; belongs to the complex I 49 kDa subunit family. NDH-1 is composed of 13 different subunits. Subunits NuoB, CD, E, F, and G constitute the peripheral sector of the complex.

It is found in the cell inner membrane. The enzyme catalyses a quinone + NADH + 5 H(+)(in) = a quinol + NAD(+) + 4 H(+)(out). In terms of biological role, NDH-1 shuttles electrons from NADH, via FMN and iron-sulfur (Fe-S) centers, to quinones in the respiratory chain. The immediate electron acceptor for the enzyme in this species is believed to be ubiquinone. Couples the redox reaction to proton translocation (for every two electrons transferred, four hydrogen ions are translocated across the cytoplasmic membrane), and thus conserves the redox energy in a proton gradient. This is NADH-quinone oxidoreductase subunit C/D from Buchnera aphidicola subsp. Cinara cedri (strain Cc).